We begin with the raw amino-acid sequence, 93 residues long: uncharacterized protein (93 aa).

Belongs to the SIMIBI class G3E GTPase family. ArgK/MeaB subfamily.

This is an uncharacterized protein from Streptomyces virginiae (Streptomyces cinnamonensis).